Reading from the N-terminus, the 187-residue chain is Peptide methionine sulfoxide reductase A2-1 (187 aa).

The protein belongs to the MsrA Met sulfoxide reductase family.

Its subcellular location is the cytoplasm. The protein resides in the cytosol. The enzyme catalyses L-methionyl-[protein] + [thioredoxin]-disulfide + H2O = L-methionyl-(S)-S-oxide-[protein] + [thioredoxin]-dithiol. It catalyses the reaction [thioredoxin]-disulfide + L-methionine + H2O = L-methionine (S)-S-oxide + [thioredoxin]-dithiol. Its function is as follows. Catalyzes the reduction of methionine sulfoxide (MetSO) to methionine in proteins. Plays a protective role against oxidative stress by restoring activity to proteins that have been inactivated by methionine oxidation. MSRA family specifically reduces the MetSO S-enantiomer. The protein is Peptide methionine sulfoxide reductase A2-1 (MSRA2-1) of Oryza sativa subsp. japonica (Rice).